The chain runs to 116 residues: UPF0102 protein Sala_0262 (116 aa).

It belongs to the UPF0102 family.

This is UPF0102 protein Sala_0262 from Sphingopyxis alaskensis (strain DSM 13593 / LMG 18877 / RB2256) (Sphingomonas alaskensis).